The primary structure comprises 240 residues: Ribonuclease HII (240 aa).

The 209-residue stretch at 7–215 folds into the RNase H type-2 domain; sequence RYAIGIDEAG…LKRIAPGWYV (209 aa). Asp13, Glu14, and Asp112 together coordinate a divalent metal cation.

It belongs to the RNase HII family. Mn(2+) is required as a cofactor. Requires Mg(2+) as cofactor.

Its subcellular location is the cytoplasm. It catalyses the reaction Endonucleolytic cleavage to 5'-phosphomonoester.. Functionally, endonuclease that specifically degrades the RNA of RNA-DNA hybrids. The sequence is that of Ribonuclease HII from Hyperthermus butylicus (strain DSM 5456 / JCM 9403 / PLM1-5).